The primary structure comprises 501 residues: Glycerol kinase (501 aa).

Thr-16 is a binding site for ADP. ATP-binding residues include Thr-16, Thr-17, and Ser-18. Thr-16 is a sn-glycerol 3-phosphate binding site. Arg-20 provides a ligand contact to ADP. Sn-glycerol 3-phosphate is bound by residues Arg-84, Glu-85, Tyr-135, and Asp-242. Residues Arg-84, Glu-85, Tyr-135, Asp-242, and Gln-243 each coordinate glycerol. ADP contacts are provided by Thr-264 and Gly-307. Thr-264, Gly-307, Gln-311, and Gly-408 together coordinate ATP. Gly-408 serves as a coordination point for ADP.

The protein belongs to the FGGY kinase family.

The catalysed reaction is glycerol + ATP = sn-glycerol 3-phosphate + ADP + H(+). It functions in the pathway polyol metabolism; glycerol degradation via glycerol kinase pathway; sn-glycerol 3-phosphate from glycerol: step 1/1. Functionally, key enzyme in the regulation of glycerol uptake and metabolism. Catalyzes the phosphorylation of glycerol to yield sn-glycerol 3-phosphate. This is Glycerol kinase from Saccharolobus islandicus (strain L.S.2.15 / Lassen #1) (Sulfolobus islandicus).